The sequence spans 258 residues: Phosphoribosylaminoimidazole-succinocarboxamide synthase (258 aa).

It belongs to the SAICAR synthetase family.

The enzyme catalyses 5-amino-1-(5-phospho-D-ribosyl)imidazole-4-carboxylate + L-aspartate + ATP = (2S)-2-[5-amino-1-(5-phospho-beta-D-ribosyl)imidazole-4-carboxamido]succinate + ADP + phosphate + 2 H(+). It functions in the pathway purine metabolism; IMP biosynthesis via de novo pathway; 5-amino-1-(5-phospho-D-ribosyl)imidazole-4-carboxamide from 5-amino-1-(5-phospho-D-ribosyl)imidazole-4-carboxylate: step 1/2. The protein is Phosphoribosylaminoimidazole-succinocarboxamide synthase of Sphingopyxis alaskensis (strain DSM 13593 / LMG 18877 / RB2256) (Sphingomonas alaskensis).